A 178-amino-acid polypeptide reads, in one-letter code: Peptide methionine sulfoxide reductase MsrA (178 aa).

C14 is an active-site residue.

This sequence belongs to the MsrA Met sulfoxide reductase family.

It catalyses the reaction L-methionyl-[protein] + [thioredoxin]-disulfide + H2O = L-methionyl-(S)-S-oxide-[protein] + [thioredoxin]-dithiol. The enzyme catalyses [thioredoxin]-disulfide + L-methionine + H2O = L-methionine (S)-S-oxide + [thioredoxin]-dithiol. Has an important function as a repair enzyme for proteins that have been inactivated by oxidation. Catalyzes the reversible oxidation-reduction of methionine sulfoxide in proteins to methionine. The chain is Peptide methionine sulfoxide reductase MsrA from Bacillus pumilus (strain SAFR-032).